Here is a 101-residue protein sequence, read N- to C-terminus: Large ribosomal subunit protein uL6m (101 aa).

The protein belongs to the universal ribosomal protein uL6 family.

Its subcellular location is the mitochondrion. The polypeptide is Large ribosomal subunit protein uL6m (RPL6) (Marchantia polymorpha (Common liverwort)).